Consider the following 296-residue polypeptide: Nucleotide-binding protein SAG0531 (296 aa).

ATP is bound at residue 13–20 (GMSGAGKT). 63–66 (DMRS) provides a ligand contact to GTP.

The protein belongs to the RapZ-like family.

In terms of biological role, displays ATPase and GTPase activities. This Streptococcus agalactiae serotype V (strain ATCC BAA-611 / 2603 V/R) protein is Nucleotide-binding protein SAG0531.